Reading from the N-terminus, the 171-residue chain is Large ribosomal subunit protein uL10 (171 aa).

The protein belongs to the universal ribosomal protein uL10 family. In terms of assembly, part of the ribosomal stalk of the 50S ribosomal subunit. The N-terminus interacts with L11 and the large rRNA to form the base of the stalk. The C-terminus forms an elongated spine to which L12 dimers bind in a sequential fashion forming a multimeric L10(L12)X complex.

Forms part of the ribosomal stalk, playing a central role in the interaction of the ribosome with GTP-bound translation factors. The sequence is that of Large ribosomal subunit protein uL10 (rplJ) from Lactococcus lactis subsp. lactis (strain IL1403) (Streptococcus lactis).